The sequence spans 550 residues: Protein UshA (550 aa).

The N-terminal stretch at 1–25 (MKFLKRGVALALLAAFALTTQPAQA) is a signal peptide. The Zn(2+) site is built by Asp-41, His-43, Asp-84, Asn-116, His-217, His-252, and Gln-254. Residues Cys-258 and Cys-275 are joined by a disulfide bond. Substrate is bound by residues Phe-429 and 498 to 504 (FNATGGD).

It belongs to the 5'-nucleotidase family. As to quaternary structure, monomer. The cofactor is Zn(2+).

It is found in the periplasm. The enzyme catalyses UDP-sugar + H2O = UMP + alpha-D-aldose 1-phosphate.. It catalyses the reaction a ribonucleoside 5'-phosphate + H2O = a ribonucleoside + phosphate. Degradation of external UDP-glucose to uridine monophosphate and glucose-1-phosphate, which can then be used by the cell. The sequence is that of Protein UshA (ushA) from Salmonella pullorum.